The chain runs to 333 residues: Glycerol-3-phosphate dehydrogenase [NAD(P)+] (333 aa).

The NADPH site is built by Ser-10, Trp-11, His-31, Arg-32, and Lys-105. Sn-glycerol 3-phosphate contacts are provided by Lys-105, Gly-136, and Ser-138. Residue Ala-140 participates in NADPH binding. Sn-glycerol 3-phosphate-binding residues include Lys-191, Asp-244, Ser-254, Arg-255, and Asn-256. Lys-191 serves as the catalytic Proton acceptor. Position 255 (Arg-255) interacts with NADPH. The NADPH site is built by Val-279 and Glu-281.

This sequence belongs to the NAD-dependent glycerol-3-phosphate dehydrogenase family.

The protein localises to the cytoplasm. It carries out the reaction sn-glycerol 3-phosphate + NAD(+) = dihydroxyacetone phosphate + NADH + H(+). The catalysed reaction is sn-glycerol 3-phosphate + NADP(+) = dihydroxyacetone phosphate + NADPH + H(+). It functions in the pathway membrane lipid metabolism; glycerophospholipid metabolism. In terms of biological role, catalyzes the reduction of the glycolytic intermediate dihydroxyacetone phosphate (DHAP) to sn-glycerol 3-phosphate (G3P), the key precursor for phospholipid synthesis. The chain is Glycerol-3-phosphate dehydrogenase [NAD(P)+] from Chlorobium limicola (strain DSM 245 / NBRC 103803 / 6330).